Here is a 370-residue protein sequence, read N- to C-terminus: WAT1-related protein At1g44800 (370 aa).

10 helical membrane passes run 11-31 (PILAIISLQFGYAGMYIITMV), 41-61 (VLATYRHVVATVVMAPFALMF), 67-87 (PKMTLAIFWRLLALGILEPLM), 102-122 (SYTSAFTNALPAVTFILALIF), 142-162 (VITVGGAMIMTLYKGPAIEIV), 182-202 (WVLGTIAIMGSISTWAAFFIL), 216-236 (LVTLICGIGTILNAIASLIMV), 252-272 (AAVYSGVVCSGIAYYIQSIVI), 278-298 (VFTTSFSPMCMIITAFLGALV), and 303-323 (IHLGSIIGAVFIVLGLYSVVW). EamA domains follow at residues 23–143 (AGMY…GTVI) and 195–322 (TWAA…YSVV).

The protein belongs to the drug/metabolite transporter (DMT) superfamily. Plant drug/metabolite exporter (P-DME) (TC 2.A.7.4) family.

The protein resides in the membrane. This is WAT1-related protein At1g44800 from Arabidopsis thaliana (Mouse-ear cress).